The primary structure comprises 247 residues: Pyrroloquinoline-quinone synthase (247 aa).

The protein belongs to the PqqC family.

It carries out the reaction 6-(2-amino-2-carboxyethyl)-7,8-dioxo-1,2,3,4,7,8-hexahydroquinoline-2,4-dicarboxylate + 3 O2 = pyrroloquinoline quinone + 2 H2O2 + 2 H2O + H(+). It functions in the pathway cofactor biosynthesis; pyrroloquinoline quinone biosynthesis. Functionally, ring cyclization and eight-electron oxidation of 3a-(2-amino-2-carboxyethyl)-4,5-dioxo-4,5,6,7,8,9-hexahydroquinoline-7,9-dicarboxylic-acid to PQQ. The protein is Pyrroloquinoline-quinone synthase of Rhizobium rhizogenes (strain K84 / ATCC BAA-868) (Agrobacterium radiobacter).